The chain runs to 38 residues: Photosystem II reaction center protein L (38 aa).

Residues 17 to 37 form a helical membrane-spanning segment; that stretch reads SLYWGLLLIFVLAVLFSNYFF.

It belongs to the PsbL family. In terms of assembly, PSII is composed of 1 copy each of membrane proteins PsbA, PsbB, PsbC, PsbD, PsbE, PsbF, PsbH, PsbI, PsbJ, PsbK, PsbL, PsbM, PsbT, PsbX, PsbY, PsbZ, Psb30/Ycf12, at least 3 peripheral proteins of the oxygen-evolving complex and a large number of cofactors. It forms dimeric complexes.

The protein resides in the plastid. It is found in the chloroplast thylakoid membrane. In terms of biological role, one of the components of the core complex of photosystem II (PSII). PSII is a light-driven water:plastoquinone oxidoreductase that uses light energy to abstract electrons from H(2)O, generating O(2) and a proton gradient subsequently used for ATP formation. It consists of a core antenna complex that captures photons, and an electron transfer chain that converts photonic excitation into a charge separation. This subunit is found at the monomer-monomer interface and is required for correct PSII assembly and/or dimerization. The protein is Photosystem II reaction center protein L of Gnetum gnemon (Spanish joint-fir).